The sequence spans 312 residues: Acetyl-coenzyme A carboxylase carboxyl transferase subunit alpha (312 aa).

The 251-residue stretch at 36–286 (RLDKEVKSIY…KEYFLDALRT (251 aa)) folds into the CoA carboxyltransferase C-terminal domain.

The protein belongs to the AccA family. As to quaternary structure, acetyl-CoA carboxylase is a heterohexamer composed of biotin carboxyl carrier protein (AccB), biotin carboxylase (AccC) and two subunits each of ACCase subunit alpha (AccA) and ACCase subunit beta (AccD).

It localises to the cytoplasm. It carries out the reaction N(6)-carboxybiotinyl-L-lysyl-[protein] + acetyl-CoA = N(6)-biotinyl-L-lysyl-[protein] + malonyl-CoA. The protein operates within lipid metabolism; malonyl-CoA biosynthesis; malonyl-CoA from acetyl-CoA: step 1/1. Component of the acetyl coenzyme A carboxylase (ACC) complex. First, biotin carboxylase catalyzes the carboxylation of biotin on its carrier protein (BCCP) and then the CO(2) group is transferred by the carboxyltransferase to acetyl-CoA to form malonyl-CoA. The chain is Acetyl-coenzyme A carboxylase carboxyl transferase subunit alpha from Helicobacter pylori (strain Shi470).